The sequence spans 131 residues: Protein Turandot M (131 aa).

The signal sequence occupies residues 1–23 (MNPTIYLSCLMVFSVFLLGKVNA).

Belongs to the Turandot family.

Its subcellular location is the secreted. Its function is as follows. A humoral factor that may play a role in stress tolerance. Requires Mekk1 expression in the fat body to regulate response to septic injury and consequent immune response. This Drosophila melanogaster (Fruit fly) protein is Protein Turandot M.